The primary structure comprises 515 residues: Maturase K (515 aa).

Belongs to the intron maturase 2 family. MatK subfamily.

It is found in the plastid. It localises to the chloroplast. Its function is as follows. Usually encoded in the trnK tRNA gene intron. Probably assists in splicing its own and other chloroplast group II introns. The sequence is that of Maturase K from Pinus uncinata (Mountain pine).